A 600-amino-acid chain; its full sequence is Zinc finger and BTB domain-containing protein 46 (600 aa).

Residues 31 to 99 enclose the BTB domain; that stretch reads CDACVVVEGK…MYSAHLALTS (69 aa). Residues 173-222 form a disordered region; the sequence is RRTSPANSSGDSAIASCHEGGSSYGKEDQEPKADGPDDVSSQSLWPGDVG. Positions 197-207 are enriched in basic and acidic residues; it reads GKEDQEPKADG. Lys-229 is covalently cross-linked (Glycyl lysine isopeptide (Lys-Gly) (interchain with G-Cter in SUMO2)). A Phosphoserine modification is found at Ser-234. Residues 235-278 form a disordered region; sequence PSHYGGSELPSSKDTAIQNSLSEQGSGDGWQPTGRRKNRKNKET. Positions 243-259 are enriched in polar residues; that stretch reads LPSSKDTAIQNSLSEQG. 2 consecutive C2H2-type zinc fingers follow at residues 418 to 436 and 446 to 468; these read FKCP…LKRH and YPCE…TLVH. Residues 513–600 are disordered; that stretch reads LDHGGGGEGS…EPDKDFAWIS (88 aa). The span at 533-555 shows a compositional bias: acidic residues; that stretch reads YLEDPDDPRGEAEEELVEDEDED. Basic and acidic residues-rich tracts occupy residues 556–574 and 591–600; these read VAKW…LLGD and EPDKDFAWIS.

Sumoylated. Desumoylation by DESI1 reverses transcriptional repression activity.

The protein localises to the nucleus. Its function is as follows. Functions as a transcriptional repressor for PRDM1. The polypeptide is Zinc finger and BTB domain-containing protein 46 (Zbtb46) (Mus musculus (Mouse)).